The following is a 635-amino-acid chain: MLNRVQILMKTANNYETIEILRNYLRLYIILARNEEGHGILIYDDNIDSIMSMMNITRLEVIGLTTHCTKLRSSPPIPMSRLFMDEIDHESYYSPKTSDYPLIDIIRKRSHEQGDIALALKRYCIENTDSISEINEWLSSKGLACYRFVKFNDYRKQMYRKFSKCTIVDSMIIGHIGHHYIWIKNLETYTRPEIDVLPFDIKYISRDELWAQISSSLDQTHIKTITVSVYGAITDNGPMPYMISTYPGNTFVNFNSVKDLILNFLDWIKDIMTSTRTIILVGYMSNLFDIPLLTVYWPNNCGWKIYNNILISSDGARVIWMDAYKFSCGLSLQDYCYHWGSKPESRPFDLIKKIDAKRNIKSWVKESMTSLKSLYEAFETQSGALEVLMSPCRMFSFSRIEDMFLTSVINRVSKNTGMGMYYPTNDISSLFIESSICLDYIIVNNQKSNKYRIKSVLDIISSKQYPAGRPNYVKNGTKGKLYIALCKVTVPTNDHIPVVYHDDDNTTTFITVLTSVDIETATRAGYSIVELGALQWDDNIPELKDCLLDSIKMIYDLNTVTTNNLLEQLIENINFNNSSIILLFYTFAISYCRAFIYSIMETIDPVYISQFSYKELYIRSSYKDINEVMSQMVKL.

The protein belongs to the orthopoxvirus OPG056 family. In terms of assembly, interacts with protein OPG164. Interacts with protein OPG064.

It localises to the virion membrane. The protein resides in the host endosome. Functionally, plays a role in intracellular enveloped virus (IEV) transport to the cell surface through microtubule transport. Together with protein OPG064, forms a complex that interacts with host KLC2 (kinesin light chain isoform 2) to engage the kinesin-1 complex and thereby promote IEV trafficking. This is Protein OPG056 (OPG056) from Variola virus (isolate Human/India/Ind3/1967) (VARV).